We begin with the raw amino-acid sequence, 865 residues long: Protein translocase subunit SecA (865 aa).

Residues Gln-85, 103 to 107, and Asp-505 contribute to the ATP site; that span reads GEGKT. Residues Cys-847, Cys-849, Cys-858, and His-859 each coordinate Zn(2+).

This sequence belongs to the SecA family. As to quaternary structure, monomer and homodimer. Part of the essential Sec protein translocation apparatus which comprises SecA, SecYEG and auxiliary proteins SecDF. Other proteins may also be involved. Requires Zn(2+) as cofactor.

The protein resides in the cell membrane. It is found in the cytoplasm. The catalysed reaction is ATP + H2O + cellular proteinSide 1 = ADP + phosphate + cellular proteinSide 2.. Part of the Sec protein translocase complex. Interacts with the SecYEG preprotein conducting channel. Has a central role in coupling the hydrolysis of ATP to the transfer of proteins into and across the cell membrane, serving as an ATP-driven molecular motor driving the stepwise translocation of polypeptide chains across the membrane. This Lactococcus lactis subsp. cremoris (strain MG1363) protein is Protein translocase subunit SecA.